Reading from the N-terminus, the 811-residue chain is G-type lectin S-receptor-like serine/threonine-protein kinase LECRK2 (811 aa).

The signal sequence occupies residues 1 to 23 (MAPILFLPILQILLIYCTKSAQA). In terms of domain architecture, Bulb-type lectin spans 24–153 (QLNISIGSSL…DGATKWESFG (130 aa)). Over 24-464 (QLNISIGSSL…DKKYWILGSS (441 aa)) the chain is Extracellular. N-linked (GlcNAc...) asparagine glycosylation is found at asparagine 26, asparagine 39, asparagine 59, asparagine 219, asparagine 226, asparagine 237, and asparagine 242. One can recognise an EGF-like; atypical domain in the interval 292-344 (PENICQTIQTKVGSGACGFNSYCTFDGTKNTTNCLCPQRYKFFDNERTYKGCR). Disulfide bonds link cysteine 296–cysteine 314, cysteine 308–cysteine 325, cysteine 327–cysteine 343, cysteine 389–cysteine 411, and cysteine 393–cysteine 399. Residue asparagine 321 is glycosylated (N-linked (GlcNAc...) asparagine). The 85-residue stretch at 352–436 (CDLDETAAMV…LQATVLLKVP (85 aa)) folds into the PAN domain. Residues 465–485 (LFFGSSVLVNFLLIFVLLFGT) form a helical membrane-spanning segment. The Cytoplasmic portion of the chain corresponds to 486–811 (YCSITSRKKT…DPSSYISSLA (326 aa)). The 275-residue stretch at 521 to 795 (GGFHEVLGTG…KVMQMLDGAV (275 aa)) folds into the Protein kinase domain. Residues 527–535 (LGTGASGIV) and lysine 551 each bind ATP. Aspartate 645 acts as the Proton acceptor in catalysis.

The protein belongs to the protein kinase superfamily. Ser/Thr protein kinase family.

Its subcellular location is the membrane. The enzyme catalyses L-seryl-[protein] + ATP = O-phospho-L-seryl-[protein] + ADP + H(+). The catalysed reaction is L-threonyl-[protein] + ATP = O-phospho-L-threonyl-[protein] + ADP + H(+). Functionally, involved in resistance against the herbivorous insect brown planthopper (N.lugens, BPH). Member of the BPH3 (BPH resistance locus 3) cluster which contains LECRK1, LECRK2 and LECRK3. The polypeptide is G-type lectin S-receptor-like serine/threonine-protein kinase LECRK2 (Oryza sativa subsp. indica (Rice)).